Here is a 121-residue protein sequence, read N- to C-terminus: MRIMLLFTAILAFSLAQSFGAVCKEPQEEVVPGGGRSKRDPDLYQLLQRLFKSHSSLEGLLKALSQASTDPKESTSPEKRDMHDFFVGLMGKRSVQPDSPTDVNQENVPSFGILKYPPRAE.

The signal sequence occupies residues 1 to 16 (MRIMLLFTAILAFSLA). A propeptide spanning residues 17–78 (QSFGAVCKEP…TDPKESTSPE (62 aa)) is cleaved from the precursor. Met-90 is subject to Methionine amide. The segment at 93–121 (RSVQPDSPTDVNQENVPSFGILKYPPRAE) is disordered. Positions 94–121 (SVQPDSPTDVNQENVPSFGILKYPPRAE) are excised as a propeptide. A compositionally biased stretch (polar residues) spans 96-108 (QPDSPTDVNQENV).

It belongs to the tachykinin family.

Its subcellular location is the secreted. Its function is as follows. Tachykinins are active peptides which excite neurons, evoke behavioral responses, are potent vasodilators and secretagogues, and contract (directly or indirectly) many smooth muscles. Is a critical central regulator of gonadal function. In Homo sapiens (Human), this protein is Tachykinin-3 (TAC3).